Here is a 274-residue protein sequence, read N- to C-terminus: NH(3)-dependent NAD(+) synthetase (274 aa).

46 to 53 provides a ligand contact to ATP; sequence GISGGQDS. Position 52 (Asp-52) interacts with Mg(2+). Arg-140 serves as a coordination point for deamido-NAD(+). Residue Thr-160 coordinates ATP. Glu-165 contributes to the Mg(2+) binding site. The deamido-NAD(+) site is built by Lys-173 and Asp-180. ATP is bound by residues Lys-189 and Thr-211. Residue 260–261 coordinates deamido-NAD(+); the sequence is HK.

Belongs to the NAD synthetase family. Homodimer.

The catalysed reaction is deamido-NAD(+) + NH4(+) + ATP = AMP + diphosphate + NAD(+) + H(+). It participates in cofactor biosynthesis; NAD(+) biosynthesis; NAD(+) from deamido-NAD(+) (ammonia route): step 1/1. Functionally, catalyzes the ATP-dependent amidation of deamido-NAD to form NAD. Uses ammonia as a nitrogen source. The sequence is that of NH(3)-dependent NAD(+) synthetase from Streptococcus pyogenes serotype M2 (strain MGAS10270).